Reading from the N-terminus, the 261-residue chain is MTTGLLQGKKGLITGIANNMSISWAIAQLAKKHGAELWFTYQSEVLEKRVKPLAEEIGCNFISELDVTNQKSISNLFNDIKEKWNSFDFLLHGMAFANKNELKGRYVETSLENFHNSLHISCYSLLELSRSAETLMHNGGSIVTLTYYGAEKVIPNYNIMGVAKAALEASVKYLANDMGENNIRVNAISAGPIKTLASSAISDFSTMLKSHAATAPLKRNITQEDVGGAAVYLFSELSKGVTGEIHYVDCGYNIIGSSKLL.

NAD(+) is bound by residues glycine 15, 21 to 22, glutamine 42, 66 to 67, and methionine 94; these read SI and DV. Alanine 97 is a binding site for substrate. Active-site proton acceptor residues include tyrosine 147 and tyrosine 157. Residues lysine 164 and 193 to 197 each bind NAD(+); that span reads IKTLA.

This sequence belongs to the short-chain dehydrogenases/reductases (SDR) family. FabI subfamily. Homotetramer.

It catalyses the reaction a 2,3-saturated acyl-[ACP] + NAD(+) = a (2E)-enoyl-[ACP] + NADH + H(+). Its pathway is lipid metabolism; fatty acid biosynthesis. Its function is as follows. Catalyzes the reduction of a carbon-carbon double bond in an enoyl moiety that is covalently linked to an acyl carrier protein (ACP). Involved in the elongation cycle of fatty acid which are used in the lipid metabolism. The chain is Enoyl-[acyl-carrier-protein] reductase [NADH] FabI (fabI) from Rickettsia prowazekii (strain Madrid E).